The primary structure comprises 304 residues: Insulin-like growth factor-binding protein 2 (304 aa).

The first 34 residues, 1–34, serve as a signal peptide directing secretion; the sequence is MLPRLGGPALPLLLPSLLLLLLLGAGGCGPGVRA. The region spanning 36–118 is the IGFBP N-terminal domain; it reads VLFRCPPCTP…VTGAGTCEKR (83 aa). 9 cysteine pairs are disulfide-bonded: Cys40/Cys68, Cys43/Cys70, Cys51/Cys71, Cys59/Cys74, Cys82/Cys95, Cys89/Cys115, Cys206/Cys240, Cys251/Cys262, and Cys264/Cys285. A Thyroglobulin type-1 domain is found at 203–285; sequence RTPCQQELDQ…APTIRGDPEC (83 aa). A Cell attachment site motif is present at residues 280–282; it reads RGD.

In terms of assembly, interacts with IGF1. Interacts with IGF2. Interacts (via RGD motif) with integrin alpha5/ITGA5; this interaction induces cell migration, adhesion or apoptosis according to the context. Interacts with PTPRB; this interaction leads to PTPRB dimerization and inactivation. Cleaved by MMP9 leading to release of free IGF2 from IGFBP2-IGF2 complex, which contributes to enhance the motility and the growth of astrocytes. In terms of processing, O-glycosylated. In adults, expressed in brain, testes, ovaries, and kidney. Expression in the adult liver is barely detectable.

It is found in the secreted. Its function is as follows. Multifunctional protein that plays a critical role in regulating the availability of IGFs such as IGF1 and IGF2 to their receptors and thereby regulates IGF-mediated cellular processes including proliferation, differentiation, and apoptosis in a cell-type specific manner. Functions coordinately with receptor protein tyrosine phosphatase beta/PTPRB and the IGF1 receptor to regulate IGF1-mediated signaling by stimulating the phosphorylation of PTEN leading to its inactivation and AKT1 activation. Plays a positive role in cell migration via interaction with integrin alpha5/ITGA5 through an RGD motif. Additionally, interaction with ITGA5/ITGB1 enhances the adhesion of endothelial progenitor cells to endothelial cells. Upon mitochondrial damage, facilitates apoptosis with ITGA5 of podocytes, and then activates the phosphorylation of focal adhesion kinase (FAK)-mediated mitochondrial injury. This is Insulin-like growth factor-binding protein 2 (Igfbp2) from Rattus norvegicus (Rat).